Reading from the N-terminus, the 157-residue chain is Cyclic pyranopterin monophosphate synthase (157 aa).

Substrate contacts are provided by residues 74 to 76 (MCH) and 112 to 113 (ME). Asp-127 is an active-site residue.

The protein belongs to the MoaC family. As to quaternary structure, homohexamer; trimer of dimers.

It carries out the reaction (8S)-3',8-cyclo-7,8-dihydroguanosine 5'-triphosphate = cyclic pyranopterin phosphate + diphosphate. The protein operates within cofactor biosynthesis; molybdopterin biosynthesis. In terms of biological role, catalyzes the conversion of (8S)-3',8-cyclo-7,8-dihydroguanosine 5'-triphosphate to cyclic pyranopterin monophosphate (cPMP). The chain is Cyclic pyranopterin monophosphate synthase from Sulfurovum sp. (strain NBC37-1).